The following is a 990-amino-acid chain: Sister chromatid cohesion protein PDS5 homolog E (990 aa).

HEAT repeat units follow at residues 31–57 (DATLSLLEVMESLLATVEQDLSSSVQK), 58–96 (ALHPPMRALVSADLLRNPDSDVRVSVVSCLTEIMRITAP), 153–190 (DLVLEMFQRFLKIIRPDHPQLVLVSMETIMITVIDESE), 191–228 (EVPMDLLEILLTTVKKDSQDVSPAALTLVEKVLSSCTC), and 232–269 (PCIMEALKSSGTSLDMYSPVVSSICQSEFATTQAHNDV). Positions 262-565 (TTQAHNDVKP…AGEEVESNTN (304 aa)) are disordered. A compositionally biased stretch (basic and acidic residues) spans 267–281 (NDVKPKDNEADEKIS). A compositionally biased stretch (basic residues) spans 302–314 (KGTRSKRSARGGT). 2 stretches are compositionally biased toward polar residues: residues 328–342 (EGLSESTDAETASGS) and 394–410 (VGQTNQSVVISLSSSGR). Composition is skewed to basic and acidic residues over residues 421-430 (TKMEETDHDV), 448-477 (PAKEDLTKSNVKKHEDGIKTGKSSKKEKAD), and 503-512 (VHSDAKKKNS). The Nuclear localization signal 1 signature appears at 458–465 (VKKHEDGI). Short sequence motifs (nuclear localization signal) lie at residues 539–546 (TKKSEQAP) and 583–590 (DKKFYEGV). The tract at residues 653-966 (KKRKIVSKNV…VGNEAEEDDQ (314 aa)) is disordered. Positions 662-673 (VEPSSSPEVRSS) are enriched in low complexity. Short sequence motifs (nuclear localization signal) lie at residues 677–684 (MKKKDSVT) and 715–722 (LKKLNGEP). The span at 727 to 742 (GRTGKKQKVTQAMHRK) shows a compositional bias: basic residues. Acidic residues predominate over residues 746 to 760 (DCDEQEDLETKDEED). Basic and acidic residues-rich tracts occupy residues 761–810 (SLKL…KTNG), 819–890 (TDGK…KETN), and 898–947 (EEQK…DKET).

The protein belongs to the PDS5 family. In terms of assembly, interacts with the cohesin complex.

The protein localises to the nucleus. Its function is as follows. Cohesin cofactor dispensable during the meiotic division but playing an important role in DNA repair by homologous recombination (HR) probably by helping SMC5/SMC6 complex. Regulator of sister chromatid cohesion in mitosis which may stabilize cohesin complex association with chromatin. May couple sister chromatid cohesion during mitosis to DNA replication. Cohesion ensures that chromosome partitioning is accurate in both meiotic and mitotic cells and plays an important role in DNA repair. This chain is Sister chromatid cohesion protein PDS5 homolog E, found in Arabidopsis thaliana (Mouse-ear cress).